The sequence spans 372 residues: Glutamate 5-kinase (372 aa).

ATP is bound at residue Lys-14. Substrate contacts are provided by Ser-54, Asp-141, and Asn-153. 173 to 174 is a binding site for ATP; that stretch reads TD. The PUA domain maps to 280–358; that stretch reads RGTLVLDDGA…ESIVRELGYM (79 aa).

It belongs to the glutamate 5-kinase family.

Its subcellular location is the cytoplasm. It carries out the reaction L-glutamate + ATP = L-glutamyl 5-phosphate + ADP. It functions in the pathway amino-acid biosynthesis; L-proline biosynthesis; L-glutamate 5-semialdehyde from L-glutamate: step 1/2. Its function is as follows. Catalyzes the transfer of a phosphate group to glutamate to form L-glutamate 5-phosphate. The sequence is that of Glutamate 5-kinase from Pseudomonas syringae pv. syringae (strain B728a).